The primary structure comprises 613 residues: Dihydroxy-acid dehydratase (613 aa).

Asp81 is a Mg(2+) binding site. Cys122 contacts [2Fe-2S] cluster. Mg(2+)-binding residues include Asp123 and Lys124. Lys124 is modified (N6-carboxylysine). Cys195 lines the [2Fe-2S] cluster pocket. Residue Glu491 participates in Mg(2+) binding. The Proton acceptor role is filled by Ser517.

This sequence belongs to the IlvD/Edd family. As to quaternary structure, homodimer. [2Fe-2S] cluster is required as a cofactor. The cofactor is Mg(2+).

It carries out the reaction (2R)-2,3-dihydroxy-3-methylbutanoate = 3-methyl-2-oxobutanoate + H2O. The catalysed reaction is (2R,3R)-2,3-dihydroxy-3-methylpentanoate = (S)-3-methyl-2-oxopentanoate + H2O. The protein operates within amino-acid biosynthesis; L-isoleucine biosynthesis; L-isoleucine from 2-oxobutanoate: step 3/4. It participates in amino-acid biosynthesis; L-valine biosynthesis; L-valine from pyruvate: step 3/4. Functions in the biosynthesis of branched-chain amino acids. Catalyzes the dehydration of (2R,3R)-2,3-dihydroxy-3-methylpentanoate (2,3-dihydroxy-3-methylvalerate) into 2-oxo-3-methylpentanoate (2-oxo-3-methylvalerate) and of (2R)-2,3-dihydroxy-3-methylbutanoate (2,3-dihydroxyisovalerate) into 2-oxo-3-methylbutanoate (2-oxoisovalerate), the penultimate precursor to L-isoleucine and L-valine, respectively. The sequence is that of Dihydroxy-acid dehydratase from Vibrio parahaemolyticus serotype O3:K6 (strain RIMD 2210633).